Reading from the N-terminus, the 275-residue chain is Low affinity immunoglobulin gamma Fc region receptor III-A (275 aa).

The signal sequence occupies residues 1-23; it reads MSVWTSRKAAEDNDTSLSSGIRA. Residues 24–207 are Extracellular-facing; the sequence is GLQKAVVTLH…SPSTFPPWHQ (184 aa). Ig-like C2-type domains are found at residues 28–92 and 101–192; these read AVVT…YTCQ and PVNL…LRIT. Intrachain disulfides connect Cys-49–Cys-91 and Cys-131–Cys-175. 3 N-linked (GlcNAc...) asparagine glycosylation sites follow: Asn-65, Asn-168, and Asn-183. A helical transmembrane segment spans residues 208–228; the sequence is ITFCLLIGLLFTIDTVMYFSV. The Cytoplasmic portion of the chain corresponds to 229–275; sequence QKGLRRSTADYEEPEVHWSKEPENKTISEEKQSFRSSRANSETPENR. Positions 237–275 are disordered; the sequence is ADYEEPEVHWSKEPENKTISEEKQSFRSSRANSETPENR. Position 239 is a phosphotyrosine (Tyr-239). Basic and acidic residues predominate over residues 242–261; sequence PEVHWSKEPENKTISEEKQS. Residues 262–275 show a composition bias toward polar residues; that stretch reads FRSSRANSETPENR.

Forms a heterooligomeric complex with ITAM-containing signaling subunits FCER1G. Interacts (via transmembrane domain) with signaling subunits; this interaction is a prerequisite for receptor complex expression on the cell surface and intracellular signal transduction. Binds the Fc region of antigen-complexed IgG. Post-translationally, N-glycosylated. Phosphorylated following receptor ligation.

Its subcellular location is the cell membrane. Functionally, receptor for the invariable Fc fragment of immunoglobulin gamma (IgG). Binds with intermediate affinity to both IgG2a and IgG2b. Can bind to IgG2a and IgG2b monomers. Does not display binding to IgG1 or IgG3. Recognizes neutralizing virus-specific IgGs displayed on the cell surface of infected cells and triggers antibody-dependent cellular cytotoxicity (ADCC). Confers protection to lethal influenza virus infection. On splenic dendritic cells, uptakes antigen immune complexes and efficiently divert them into MHC class I and II antigen presentation pathways to provide for superior priming of CD4-positive and CD8-positive T cell immune responses. Mediates neutrophil activation by IgG complexes redundantly with FCGR2A. Plays a role in promoting bone resorption by enhancing osteoclast differentiation following binding to IgG2a. Also acts as a receptor for the Fc region of immunoglobulin epsilon (IgE). Binds with low affinity to both the a and b allotypes of IgE. Has also been shown to bind to IgE allotype a only but not to allotype b. Binds aggregated IgE but not the monomeric form and bound monomeric IgG is readily displaced by IgE complexes. Binding to IgE promotes macrophage-mediated phagocytosis, antigen presentation to T cells, production of pro-inflammatory cytokines and the late phase of cutaneous allergic reactions. Mediates enhanced ADCC in response to afucosylated IgGs. This is Low affinity immunoglobulin gamma Fc region receptor III-A from Cricetulus griseus (Chinese hamster).